Here is a 166-residue protein sequence, read N- to C-terminus: Crossover junction endodeoxyribonuclease RuvC (166 aa).

Residues aspartate 7, glutamate 68, and aspartate 141 contribute to the active site. The Mg(2+) site is built by aspartate 7, glutamate 68, and aspartate 141.

Belongs to the RuvC family. Homodimer which binds Holliday junction (HJ) DNA. The HJ becomes 2-fold symmetrical on binding to RuvC with unstacked arms; it has a different conformation from HJ DNA in complex with RuvA. In the full resolvosome a probable DNA-RuvA(4)-RuvB(12)-RuvC(2) complex forms which resolves the HJ. It depends on Mg(2+) as a cofactor.

The protein resides in the cytoplasm. The enzyme catalyses Endonucleolytic cleavage at a junction such as a reciprocal single-stranded crossover between two homologous DNA duplexes (Holliday junction).. Its function is as follows. The RuvA-RuvB-RuvC complex processes Holliday junction (HJ) DNA during genetic recombination and DNA repair. Endonuclease that resolves HJ intermediates. Cleaves cruciform DNA by making single-stranded nicks across the HJ at symmetrical positions within the homologous arms, yielding a 5'-phosphate and a 3'-hydroxyl group; requires a central core of homology in the junction. The consensus cleavage sequence is 5'-(A/T)TT(C/G)-3'. Cleavage occurs on the 3'-side of the TT dinucleotide at the point of strand exchange. HJ branch migration catalyzed by RuvA-RuvB allows RuvC to scan DNA until it finds its consensus sequence, where it cleaves and resolves the cruciform DNA. The sequence is that of Crossover junction endodeoxyribonuclease RuvC from Caldicellulosiruptor saccharolyticus (strain ATCC 43494 / DSM 8903 / Tp8T 6331).